Consider the following 101-residue polypeptide: Thylakoid-associated protein slr0729 (101 aa).

The protein resides in the cellular thylakoid membrane. In Synechocystis sp. (strain ATCC 27184 / PCC 6803 / Kazusa), this protein is Thylakoid-associated protein slr0729.